The following is a 388-amino-acid chain: Galactokinase (388 aa).

A substrate-binding site is contributed by E32–D35. ATP is bound by residues S66 and G123 to S129. Mg(2+) contacts are provided by S129 and E161. Catalysis depends on D173, which acts as the Proton acceptor. A substrate-binding site is contributed by Y223.

It belongs to the GHMP kinase family. GalK subfamily.

The protein resides in the cytoplasm. The catalysed reaction is alpha-D-galactose + ATP = alpha-D-galactose 1-phosphate + ADP + H(+). It participates in carbohydrate metabolism; galactose metabolism. Catalyzes the transfer of the gamma-phosphate of ATP to D-galactose to form alpha-D-galactose-1-phosphate (Gal-1-P). This is Galactokinase from Staphylococcus carnosus (strain TM300).